We begin with the raw amino-acid sequence, 334 residues long: N,N'-diacetyllegionaminic acid synthase (334 aa).

The AFP-like domain occupies 282-334 (SLVAKKDIKKGEIFSEGNLTTKRPANGISAMRYEEFLGKIATKNYKEDELIRE).

It carries out the reaction 2,4-diacetamido-2,4,6-trideoxy-alpha-D-mannopyranose + phosphoenolpyruvate + H2O = N,N-diacetyllegionaminate + phosphate. In terms of biological role, involved in biosynthesis of legionaminic acid (5,7-diamino-3,5,7,9-tetradeoxy-D-glycero-D-galacto-non-2-ulosonic acid)(Leg), a sialic acid-like derivative that is incorporated into flagellin via O-linkage to Ser/Thr. Catalyzes the condensation of 2,4-diacetamido-2,4,6-trideoxymannose with phosphoenolpyruvate (PEP) to give N,N'-diacetyllegionaminic acid. The protein is N,N'-diacetyllegionaminic acid synthase (legI) of Campylobacter jejuni subsp. jejuni serotype O:2 (strain ATCC 700819 / NCTC 11168).